We begin with the raw amino-acid sequence, 1108 residues long: Mediator of RNA polymerase II transcription subunit 14 (1108 aa).

Disordered stretches follow at residues 1 to 30 (MAAV…GGDT), 35 to 54 (SSEI…DNPL), and 1048 to 1108 (QQQR…VDLT). Over residues 35-52 (SSEIVQQQTPARSLQSDN) the composition is skewed to polar residues. Positions 1048 to 1080 (QQQRQPVVQPGQQPQVQNQANGVMNRGPQRPGL) are enriched in low complexity.

The protein belongs to the Mediator complex subunit 14 family. Component of the Mediator complex.

The protein localises to the nucleus. Component of the Mediator complex, a coactivator involved in the regulated transcription of nearly all RNA polymerase II-dependent genes. Mediator functions as a bridge to convey information from gene-specific regulatory proteins to the basal RNA polymerase II transcription machinery. Mediator is recruited to promoters by direct interactions with regulatory proteins and serves as a scaffold for the assembly of a functional preinitiation complex with RNA polymerase II and the general transcription factors. In Pyricularia oryzae (strain 70-15 / ATCC MYA-4617 / FGSC 8958) (Rice blast fungus), this protein is Mediator of RNA polymerase II transcription subunit 14 (RGR1).